A 141-amino-acid polypeptide reads, in one-letter code: MVHSQLPVAAPLRLLCALLLLPLATMIPGGLSPRSVTDPDVQEAAEFAVQEYNALSANAYYYKQLRIVEAQSQVVTGAKYYLTMELMKTKCAKTTGKPKVYKEIQNCELPPKAQQEKLTCRFQVWSCPWLQKIELTKMSCN.

The first 26 residues, Met-1–Met-26, serve as a signal peptide directing secretion. One can recognise a Cystatin domain in the interval Gly-29–Trp-129. A Secondary area of contact motif is present at residues Gln-73–Gly-77. Cystine bridges form between Cys-91/Cys-107 and Cys-120/Cys-140.

It belongs to the cystatin family. Expressed at a low level by the venom gland (at protein level).

The protein localises to the secreted. Its function is as follows. Recombinant AsCystatin inhibits various C1 cysteine proteases including cathepsin L (Ki is 0.89 pM), papain (Ki is 1.74 pM) and cathepsin B (Ki is 0.69 nM). This activity has also been observed in the crude venom. This protein has no toxic activity and its function in the venom is unknown. It may play a role as a housekeeping or regulatory protein. The protein is AsCystatin of Austrelaps superbus (Lowland copperhead snake).